The primary structure comprises 190 residues: Large ribosomal subunit protein bL25 (190 aa).

It belongs to the bacterial ribosomal protein bL25 family. CTC subfamily. As to quaternary structure, part of the 50S ribosomal subunit; part of the 5S rRNA/L5/L18/L25 subcomplex. Contacts the 5S rRNA. Binds to the 5S rRNA independently of L5 and L18.

In terms of biological role, this is one of the proteins that binds to the 5S RNA in the ribosome where it forms part of the central protuberance. The chain is Large ribosomal subunit protein bL25 from Neisseria gonorrhoeae (strain ATCC 700825 / FA 1090).